The primary structure comprises 79 residues: Translational regulator CsrA (79 aa).

Belongs to the CsrA/RsmA family. As to quaternary structure, homodimer; the beta-strands of each monomer intercalate to form a hydrophobic core, while the alpha-helices form wings that extend away from the core.

It is found in the cytoplasm. In terms of biological role, a translational regulator that binds mRNA to regulate translation initiation and/or mRNA stability. Usually binds in the 5'-UTR at or near the Shine-Dalgarno sequence preventing ribosome-binding, thus repressing translation. Its main target seems to be the major flagellin gene, while its function is anatagonized by FliW. In Geobacter sulfurreducens (strain ATCC 51573 / DSM 12127 / PCA), this protein is Translational regulator CsrA.